A 122-amino-acid polypeptide reads, in one-letter code: uncharacterized protein (122 aa).

Its subcellular location is the plastid. This is an uncharacterized protein from Euglena longa (Euglenophycean alga).